The primary structure comprises 119 residues: Membrane-anchored ubiquitin-fold protein 3 (119 aa).

The Ubiquitin-like domain occupies 8–76 (IEVKFRLFDG…NNRTLAESRV (69 aa)). Residue C116 is modified to Cysteine methyl ester. A lipid anchor (S-geranylgeranyl cysteine) is attached at C116. Residues 117–119 (TIL) constitute a propeptide, removed in mature form.

It localises to the cell membrane. In terms of biological role, may serve as docking site to facilitate the association of other proteins to the plasma membrane. This chain is Membrane-anchored ubiquitin-fold protein 3 (MUB3), found in Oryza sativa subsp. japonica (Rice).